We begin with the raw amino-acid sequence, 360 residues long: Xanthohumol 4-O-methyltransferase (360 aa).

S-adenosyl-L-methionine is bound at residue Asp-227. The active-site Proton acceptor is the His-266.

Belongs to the class I-like SAM-binding methyltransferase superfamily. Cation-independent O-methyltransferase family. Homodimer. As to expression, highly expressed in lupulin glands. Detected in cones, male flowers and roots.

Its subcellular location is the cytoplasm. It catalyses the reaction xanthohumol + S-adenosyl-L-methionine = 4-O-methylxanthohumol + S-adenosyl-L-homocysteine + H(+). The enzyme catalyses desmethylxanthohumol + S-adenosyl-L-methionine = xanthohumol + S-adenosyl-L-homocysteine + H(+). It carries out the reaction isoliquiritigenin + S-adenosyl-L-methionine = 2'-O-methylisoliquiritigenin + S-adenosyl-L-homocysteine + H(+). The catalysed reaction is trans-resveratrol + S-adenosyl-L-methionine = 3-methoxy-4',5-dihydroxy-trans-stilbene + S-adenosyl-L-homocysteine + H(+). Its pathway is secondary metabolite biosynthesis. With respect to regulation, inhibited by S-adenosyl homocysteine. Functionally, involved in the biosynthesis of prenylated phenolics natural products which contribute to the bitter taste of beer and display broad biological activities. O-methyltransferase with a low substrate selectivity. Methylates chalconaringenin, desmethylxanthohumol, xanthohumol, isoliquiritigenin, butein, 2',4-dihydroxychalcone, resveratrol, genistein and guaiacol. Catalyzes the biosynthesis of 2',4'-dihydroxy-4,6'-dimethoxy-3'-prenylchalcone (4-O-methylxanthohumol). This is Xanthohumol 4-O-methyltransferase from Humulus lupulus (European hop).